The sequence spans 374 residues: Ribosomal RNA large subunit methyltransferase G (374 aa).

This sequence belongs to the methyltransferase superfamily. RlmG family.

It localises to the cytoplasm. The enzyme catalyses guanosine(1835) in 23S rRNA + S-adenosyl-L-methionine = N(2)-methylguanosine(1835) in 23S rRNA + S-adenosyl-L-homocysteine + H(+). Its function is as follows. Specifically methylates the guanine in position 1835 (m2G1835) of 23S rRNA. In Pseudomonas aeruginosa (strain ATCC 15692 / DSM 22644 / CIP 104116 / JCM 14847 / LMG 12228 / 1C / PRS 101 / PAO1), this protein is Ribosomal RNA large subunit methyltransferase G.